The chain runs to 470 residues: Glucose-1-phosphate adenylyltransferase (470 aa).

Residues Gly-165, 182 to 183, and Ser-200 each bind alpha-D-glucose 1-phosphate; that span reads EK.

It belongs to the bacterial/plant glucose-1-phosphate adenylyltransferase family. In terms of assembly, homotetramer.

It catalyses the reaction alpha-D-glucose 1-phosphate + ATP + H(+) = ADP-alpha-D-glucose + diphosphate. It participates in glycan biosynthesis; glycogen biosynthesis. Its function is as follows. Involved in the biosynthesis of ADP-glucose, a building block required for the elongation reactions to produce glycogen. Catalyzes the reaction between ATP and alpha-D-glucose 1-phosphate (G1P) to produce pyrophosphate and ADP-Glc. The protein is Glucose-1-phosphate adenylyltransferase of Paenarthrobacter aurescens (strain TC1).